We begin with the raw amino-acid sequence, 93 residues long: Large ribosomal subunit protein bL27 (93 aa).

A propeptide spanning residues 1–8 (MIMDLQFF) is cleaved from the precursor. The tract at residues 8–29 (FSHHKGGGSTANGRNSAGRRLG) is disordered.

The protein belongs to the bacterial ribosomal protein bL27 family. The N-terminus is cleaved by ribosomal processing cysteine protease Prp.

The chain is Large ribosomal subunit protein bL27 from Limosilactobacillus fermentum (strain NBRC 3956 / LMG 18251) (Lactobacillus fermentum).